The sequence spans 1143 residues: Disease resistance protein Piks-1 (1143 aa).

The interval 1 to 190 (MEAAAMAVTA…PLRIMGGEMQ (190 aa)) is structured coiled coil (CC) domain. Residues 189 to 258 (MQKIVFKIPM…KVGPAMFLEV (70 aa)) enclose the HMA domain. The interval 191–264 (KIVFKIPMVD…FLEVSQAKED (74 aa)) is HMA-like domain. Residues 282-570 (HEVKTICILG…WIAEGFVSEE (289 aa)) form the NB-ARC domain. LRR repeat units lie at residues 681-706 (FKRL…ICEQ), 708-731 (SLRV…MRKL), 732-754 (KHLE…IGEL), 756-777 (HLRI…IREL), 778-800 (QHLH…VGKL), 802-823 (NLKI…IGEL), 824-848 (NHLQ…QISQ), 945-968 (MPNL…INGT), 979-1002 (DSRV…EFKF), and 1004-1027 (AGPA…VFRC).

It belongs to the disease resistance NB-LRR family. In terms of assembly, interacts with AVR-Pik through its N-terminal part containing the HMA-like domain.

Functionally, disease resistance (R) protein that specifically recognizes the AVR-Pik effector avirulence protein from M.oryzae. Resistance proteins guard the plant against pathogens that contain an appropriate avirulence protein via an indirect interaction with this avirulence protein. That triggers a defense system including the hypersensitive response, which restricts the pathogen growth. In Oryza sativa subsp. japonica (Rice), this protein is Disease resistance protein Piks-1.